The following is a 173-amino-acid chain: Peptide methionine sulfoxide reductase MsrA (173 aa).

Residue C10 is part of the active site.

It belongs to the MsrA Met sulfoxide reductase family.

The catalysed reaction is L-methionyl-[protein] + [thioredoxin]-disulfide + H2O = L-methionyl-(S)-S-oxide-[protein] + [thioredoxin]-dithiol. The enzyme catalyses [thioredoxin]-disulfide + L-methionine + H2O = L-methionine (S)-S-oxide + [thioredoxin]-dithiol. Functionally, has an important function as a repair enzyme for proteins that have been inactivated by oxidation. Catalyzes the reversible oxidation-reduction of methionine sulfoxide in proteins to methionine. The chain is Peptide methionine sulfoxide reductase MsrA from Acinetobacter baumannii (strain AB307-0294).